A 147-amino-acid chain; its full sequence is MEIILKEDIVNLGYKNDIVNVKSGYGRNYLIPTGKAIIASPSAKKMLAEDLKQRAHKLEKIKKDAEALAAKLEGVSLTIATKVSSTGTIFGSVSNIQIAEALAKLGHEIDRKIIVVKDAVKEVGNYKAIVKLHKEVSVEIPFEVVAE.

Belongs to the bacterial ribosomal protein bL9 family.

Binds to the 23S rRNA. The protein is Large ribosomal subunit protein bL9 of Bacteroides thetaiotaomicron (strain ATCC 29148 / DSM 2079 / JCM 5827 / CCUG 10774 / NCTC 10582 / VPI-5482 / E50).